Consider the following 273-residue polypeptide: Large ribosomal subunit protein uL2 (273 aa).

Disordered regions lie at residues 30–50 (YAPLLDTKSKTGGRNNFGRIT) and 221–273 (RGTA…RRGK). Residues 253-273 (KGKKTRHNKRTDKFIVRRRGK) are compositionally biased toward basic residues.

It belongs to the universal ribosomal protein uL2 family. In terms of assembly, part of the 50S ribosomal subunit. Forms a bridge to the 30S subunit in the 70S ribosome.

In terms of biological role, one of the primary rRNA binding proteins. Required for association of the 30S and 50S subunits to form the 70S ribosome, for tRNA binding and peptide bond formation. It has been suggested to have peptidyltransferase activity; this is somewhat controversial. Makes several contacts with the 16S rRNA in the 70S ribosome. In Pasteurella multocida (strain Pm70), this protein is Large ribosomal subunit protein uL2.